A 204-amino-acid polypeptide reads, in one-letter code: Uridylate kinase (204 aa).

26–31 (GAGKGT) lines the ATP pocket. Residues 46 to 76 (SAGDLLRAEQGRAGSQYGELIKNCIKEGQIV) are NMP. Residues R52, 74 to 76 (QIV), 104 to 107 (GFPR), and Q111 each bind a ribonucleoside 5'-phosphate. The interval 141-151 (ERGKTSGRSDD) is LID. R142 is a binding site for ATP. A ribonucleoside 5'-phosphate is bound by residues R148 and R159. R187 provides a ligand contact to ATP.

This sequence belongs to the adenylate kinase family. UMP-CMP kinase subfamily. In terms of assembly, monomer. The cofactor is Mg(2+).

It is found in the cytoplasm. It localises to the nucleus. The catalysed reaction is UMP + ATP = UDP + ADP. Functionally, catalyzes the phosphorylation of pyrimidine nucleoside monophosphates at the expense of ATP. Plays an important role in de novo pyrimidine nucleotide biosynthesis. Has preference for UMP and dUMP as phosphate acceptors, but can also use CMP, dCMP, AMP, GMP, dGMP and dTMP. ATP and dATP are the best phosphate donors, but can also use GTP, dGTP, dCTP, and dTTP to some degree. The chain is Uridylate kinase from Saccharomyces cerevisiae (strain ATCC 204508 / S288c) (Baker's yeast).